The sequence spans 681 residues: Angiomotin-like 2b (681 aa).

Low complexity predominate over residues 68–84 (GGGAASSSQSSSESLSQ). Residues 68-106 (GGGAASSSQSSSESLSQDEPHSPQLSTRQEPQGQEHQVD) are disordered. A compositionally biased stretch (polar residues) spans 90 to 102 (PQLSTRQEPQGQE). Tyrosine 126 carries the post-translational modification Phosphotyrosine; by FGFR1. Coiled-coil stretches lie at residues 268–319 (NACS…LMKG), 362–441 (IEKL…LQAT), and 481–508 (VYTLQENLREKEERILSLEADKIRWEQK). Positions 589 to 618 (QLGALQPATADSSIISSHSTPAHTAQGKER) are disordered. Residues 597–611 (TADSSIISSHSTPAH) are compositionally biased toward polar residues. Positions 678–681 (EIFI) match the PDZ-binding motif.

It belongs to the angiomotin family. As to quaternary structure, interacts with SRC. In terms of processing, phosphorylation at Tyr-126 is necessary for efficient binding to SRC and synergistically functioning with SRC to activate the downstream MAPK pathway. In terms of tissue distribution, expressed in endothelial cells.

The protein resides in the recycling endosome. It localises to the cytoplasm. It is found in the cell projection. Its subcellular location is the podosome. The protein localises to the cell junction. Required for proper architecture of actin filaments and for cell movements during embryogenesis. Plays a role in the radial actin fiber architecture in skin epithelial cells, thereby maintains cell geometry, size and cell interconnectivity within the skin. Plays an important role in coupling actin fibers to cell junctions in endothelial cells and is therefore required for correct endothelial cell morphology and maintenance of dorsal aorta lumen expansion during embryogenesis. May further play a role in the polarity, proliferation and migration of endothelial cells, and therefore participates in angiogenesis. May regulate the translocation of phosphorylated SRC to peripheral cell-matrix adhesion sites. The sequence is that of Angiomotin-like 2b from Danio rerio (Zebrafish).